A 208-amino-acid polypeptide reads, in one-letter code: Imidazoleglycerol-phosphate dehydratase (208 aa).

Positions Met-1 to Ala-20 are disordered. Low complexity predominate over residues Val-7–Gly-19.

This sequence belongs to the imidazoleglycerol-phosphate dehydratase family.

It localises to the cytoplasm. The catalysed reaction is D-erythro-1-(imidazol-4-yl)glycerol 3-phosphate = 3-(imidazol-4-yl)-2-oxopropyl phosphate + H2O. The protein operates within amino-acid biosynthesis; L-histidine biosynthesis; L-histidine from 5-phospho-alpha-D-ribose 1-diphosphate: step 6/9. The protein is Imidazoleglycerol-phosphate dehydratase of Anaeromyxobacter sp. (strain K).